The sequence spans 343 residues: C5a anaphylatoxin chemotactic receptor 2 (343 aa).

Over 1–44 the chain is Extracellular; the sequence is MLNDTTSKDYEYEYDQEQYSDLLNVPVDCPAGNCFSNDAYLIVL. An N-linked (GlcNAc...) asparagine glycan is attached at N3. Residues 45-67 traverse the membrane as a helical segment; sequence LGLYSVIFLVGVPGNTLLAWVTW. Residues 68–78 lie on the Cytoplasmic side of the membrane; the sequence is KESRHRLGASW. The chain crosses the membrane as a helical span at residues 79–101; the sequence is FLHLTMADLLCCVSLPFLAVPIA. Over 102–120 the chain is Extracellular; that stretch reads QKGHWPYGTAGCWLLSSIT. The cysteines at positions 113 and 192 are disulfide-linked. Residues 121-143 traverse the membrane as a helical segment; it reads VLSMYASVLLLTGLSGDLFLLAF. Over 144–155 the chain is Cytoplasmic; sequence RPSWKNADQRTC. A helical membrane pass occupies residues 156-178; sequence GVRVVQVSSWMLALLLTVPGAVY. Residues 179-208 lie on the Extracellular side of the membrane; the sequence is RKLLQEHYPPRLVCGTNYGGSVTAEVTITT. A helical membrane pass occupies residues 209–231; sequence VRFLFGFLVPLVFMASCHGILQR. Residues 232–243 are Cytoplasmic-facing; sequence QMARRHWPLGTA. Residues 244-266 form a helical membrane-spanning segment; that stretch reads VVVGFFICWTPFHLLRVIIAVAS. Over 267–280 the chain is Extracellular; the sequence is SHSPLLAWALEAEP. Residues 281 to 300 form a helical membrane-spanning segment; it reads LVTGLALAHSALNPIMFLYF. Residues 301–343 lie on the Cytoplasmic side of the membrane; that stretch reads GRKQLCKSLQAACHWALRDLQDEEESAVTKVSTSQEMVSEMPV. At S326 the chain carries Phosphoserine.

The protein belongs to the G-protein coupled receptor 1 family. As to quaternary structure, interacts with C3 (the anaphylatoxin peptide C3a and the adipogenic hormone ASP); the interaction occurs with higher affinity for ASP, enhancing the phosphorylation and activation of GPR77, recruitment of ARRB2 to the cell surface and endocytosis of GRP77.

The protein localises to the cell membrane. In terms of biological role, receptor for the chemotactic and inflammatory C3a, C4a and C5a anaphylatoxin peptides and also for their dearginated forms ASP/C3adesArg, C4adesArg and C5adesArg respectively. Couples weakly to G(i)-mediated signaling pathways. The sequence is that of C5a anaphylatoxin chemotactic receptor 2 (C5ar2) from Rattus norvegicus (Rat).